Reading from the N-terminus, the 230-residue chain is Ribose-5-phosphate isomerase A (230 aa).

Residues 32 to 35 (TGST), 85 to 88 (DGAD), and 98 to 101 (KGGG) contribute to the substrate site. The Proton acceptor role is filled by Glu107. Lys125 lines the substrate pocket.

It belongs to the ribose 5-phosphate isomerase family. As to quaternary structure, homodimer.

The enzyme catalyses aldehydo-D-ribose 5-phosphate = D-ribulose 5-phosphate. The protein operates within carbohydrate degradation; pentose phosphate pathway; D-ribose 5-phosphate from D-ribulose 5-phosphate (non-oxidative stage): step 1/1. Its function is as follows. Catalyzes the reversible conversion of ribose-5-phosphate to ribulose 5-phosphate. In Burkholderia vietnamiensis (strain G4 / LMG 22486) (Burkholderia cepacia (strain R1808)), this protein is Ribose-5-phosphate isomerase A.